The chain runs to 361 residues: Phospho-N-acetylmuramoyl-pentapeptide-transferase (361 aa).

The next 10 helical transmembrane spans lie at 28–48, 74–94, 99–119, 133–153, 168–188, 203–223, 236–256, 263–283, 288–308, and 338–358; these read LAII…IKFL, TMGG…LADL, IWIT…DDYA, SKFL…EYLD, LSLD…VGSS, VPIA…GNLI, TGEL…FLWF, VFMG…ISVI, IVLA…ILQV, and KVVI…LSSL.

Belongs to the glycosyltransferase 4 family. MraY subfamily. Mg(2+) is required as a cofactor.

It localises to the cell inner membrane. It carries out the reaction UDP-N-acetyl-alpha-D-muramoyl-L-alanyl-gamma-D-glutamyl-meso-2,6-diaminopimeloyl-D-alanyl-D-alanine + di-trans,octa-cis-undecaprenyl phosphate = di-trans,octa-cis-undecaprenyl diphospho-N-acetyl-alpha-D-muramoyl-L-alanyl-D-glutamyl-meso-2,6-diaminopimeloyl-D-alanyl-D-alanine + UMP. The protein operates within cell wall biogenesis; peptidoglycan biosynthesis. In terms of biological role, catalyzes the initial step of the lipid cycle reactions in the biosynthesis of the cell wall peptidoglycan: transfers peptidoglycan precursor phospho-MurNAc-pentapeptide from UDP-MurNAc-pentapeptide onto the lipid carrier undecaprenyl phosphate, yielding undecaprenyl-pyrophosphoryl-MurNAc-pentapeptide, known as lipid I. This is Phospho-N-acetylmuramoyl-pentapeptide-transferase from Rickettsia prowazekii (strain Madrid E).